The chain runs to 1652 residues: Maestro heat-like repeat-containing protein family member 1 (1652 aa).

HEAT repeat units lie at residues 3–41 (ETYA…SKPA), 260–300 (EEQL…VGSR), 344–382 (CCSP…AAAA), 385–423 (EVKK…HGYL), 1369–1407 (LMLL…GSPD), 1410–1448 (QTHS…LMDL), and 1616–1652 (QVDL…VKFA).

This sequence belongs to the MROH1 family. As to quaternary structure, homooligomer; homooligomerizes at lysosome scission sites.

The protein resides in the lysosome membrane. Lysosome fission factor. Recruited to lysosomes by RAB7 (RAB7A or RAB7B) at scission sites and homooligomerizes to mediate the constriction and scission of lysosomal tubules. May sever membranes by inserting amphipathic helices into one bilayer leaflet. Lysosome fission is required to maintain their steady-state number, shape, size, composition and function, and to accomplish regeneration. This Bos taurus (Bovine) protein is Maestro heat-like repeat-containing protein family member 1 (MROH1).